The chain runs to 212 residues: Adenine phosphoribosyltransferase (212 aa).

Belongs to the purine/pyrimidine phosphoribosyltransferase family. As to quaternary structure, homodimer.

The protein resides in the cytoplasm. It carries out the reaction AMP + diphosphate = 5-phospho-alpha-D-ribose 1-diphosphate + adenine. The protein operates within purine metabolism; AMP biosynthesis via salvage pathway; AMP from adenine: step 1/1. Functionally, catalyzes a salvage reaction resulting in the formation of AMP, that is energically less costly than de novo synthesis. In Mycobacterium tuberculosis (strain CDC 1551 / Oshkosh), this protein is Adenine phosphoribosyltransferase.